The chain runs to 299 residues: Transcription termination/antitermination protein NusG (299 aa).

A disordered region spans residues 30 to 96; it reads DPDEAELADA…APVEPAEPVD (67 aa). 2 repeat units span residues 46-49 and 70-73. Residues 46–87 form a 4 X 4 AA repeats of E-E-A-A region; it reads EEAALHVESDEDEDEADVEVDAAVEEAADDAEVAEEEAEEAA. The segment covering 54 to 87 has biased composition (acidic residues); it reads SDEDEDEADVEVDAAVEEAADDAEVAEEEAEEAA. One copy of the 3; approximate repeat lies at 80 to 83; it reads EEEA. The stretch at 84 to 87 is repeat 4; sequence EEAA. One can recognise a KOW domain in the interval 248-276; it reads VGDSVTVTDGPFATLQATINEINPDSKKV.

It belongs to the NusG family. Post-translationally, the N-terminus is blocked.

Functionally, participates in transcription elongation, termination and antitermination. In Streptomyces virginiae (Streptomyces cinnamonensis), this protein is Transcription termination/antitermination protein NusG.